A 505-amino-acid chain; its full sequence is Tubby protein homolog (505 aa).

The segment at 35-243 is disordered; the sequence is EQKQKKKRQE…PSPAAPEPPV (209 aa). The segment covering 70 to 87 has biased composition (low complexity); it reads LVESYLSSSGSTSYQVQE. A compositionally biased stretch (acidic residues) spans 196 to 205; it reads FDEEEDEDEN. Over residues 206 to 220 the composition is skewed to low complexity; the sequence is SSSSSQLNSNTRPSS.

This sequence belongs to the TUB family. Interacts with GNAQ. Interacts with TULP1.

The protein resides in the cytoplasm. The protein localises to the nucleus. Its subcellular location is the secreted. It localises to the cell membrane. Functions in signal transduction from heterotrimeric G protein-coupled receptors. Binds to membranes containing phosphatidylinositol 4,5-bisphosphate. Can bind DNA (in vitro). May contribute to the regulation of transcription in the nucleus. Could be involved in the hypothalamic regulation of body weight. Contribute to stimulation of phagocytosis of apoptotic retinal pigment epithelium (RPE) cells and macrophages. This is Tubby protein homolog (Tub) from Rattus norvegicus (Rat).